Here is a 293-residue protein sequence, read N- to C-terminus: Ribosomal protein L11 methyltransferase (293 aa).

S-adenosyl-L-methionine-binding residues include threonine 145, glycine 166, aspartate 188, and asparagine 230.

Belongs to the methyltransferase superfamily. PrmA family.

The protein resides in the cytoplasm. The enzyme catalyses L-lysyl-[protein] + 3 S-adenosyl-L-methionine = N(6),N(6),N(6)-trimethyl-L-lysyl-[protein] + 3 S-adenosyl-L-homocysteine + 3 H(+). Methylates ribosomal protein L11. The protein is Ribosomal protein L11 methyltransferase of Klebsiella pneumoniae (strain 342).